Reading from the N-terminus, the 32-residue chain is Cytochrome b6-f complex subunit 7 (32 aa).

Residues 9–27 (AALFWVLIPLGLAGGALLL) form a helical membrane-spanning segment.

Belongs to the PetM family. As to quaternary structure, the 4 large subunits of the cytochrome b6-f complex are cytochrome b6, subunit IV (17 kDa polypeptide, PetD), cytochrome f and the Rieske protein, while the 4 small subunits are PetG, PetL, PetM and PetN. The complex functions as a dimer.

It is found in the cellular thylakoid membrane. Its function is as follows. Component of the cytochrome b6-f complex, which mediates electron transfer between photosystem II (PSII) and photosystem I (PSI), cyclic electron flow around PSI, and state transitions. The chain is Cytochrome b6-f complex subunit 7 from Synechococcus sp. (strain RCC307).